The following is a 150-amino-acid chain: uncharacterized protein (150 aa).

The region spanning 19 to 93 (GAQDYVLVDV…SSKRLALRES (75 aa)) is the Rhodanese domain.

This is an uncharacterized protein from Synechococcus elongatus.